A 451-amino-acid chain; its full sequence is Bifunctional protein GlmU (451 aa).

Residues 1–232 (MTARSSLTIV…EDEVRGINTK (232 aa)) are pyrophosphorylase. UDP-N-acetyl-alpha-D-glucosamine contacts are provided by residues 11 to 14 (LAAG), Lys25, Gln78, and 83 to 84 (GT). Asp108 contributes to the Mg(2+) binding site. 4 residues coordinate UDP-N-acetyl-alpha-D-glucosamine: Gly144, Glu158, Asn173, and Asn230. Asn230 serves as a coordination point for Mg(2+). The linker stretch occupies residues 233-253 (AQLAEAESVMQARLRKAAMEA). The N-acetyltransferase stretch occupies residues 254-451 (GVTLIAPETV…MKTRGKKPEK (198 aa)). Arg319 and Lys337 together coordinate UDP-N-acetyl-alpha-D-glucosamine. His349 functions as the Proton acceptor in the catalytic mechanism. Positions 352 and 363 each coordinate UDP-N-acetyl-alpha-D-glucosamine. Residues Ala366, 372–373 (NY), Ser409, and Arg426 each bind acetyl-CoA.

This sequence in the N-terminal section; belongs to the N-acetylglucosamine-1-phosphate uridyltransferase family. The protein in the C-terminal section; belongs to the transferase hexapeptide repeat family. As to quaternary structure, homotrimer. It depends on Mg(2+) as a cofactor.

It is found in the cytoplasm. The catalysed reaction is alpha-D-glucosamine 1-phosphate + acetyl-CoA = N-acetyl-alpha-D-glucosamine 1-phosphate + CoA + H(+). The enzyme catalyses N-acetyl-alpha-D-glucosamine 1-phosphate + UTP + H(+) = UDP-N-acetyl-alpha-D-glucosamine + diphosphate. The protein operates within nucleotide-sugar biosynthesis; UDP-N-acetyl-alpha-D-glucosamine biosynthesis; N-acetyl-alpha-D-glucosamine 1-phosphate from alpha-D-glucosamine 6-phosphate (route II): step 2/2. Its pathway is nucleotide-sugar biosynthesis; UDP-N-acetyl-alpha-D-glucosamine biosynthesis; UDP-N-acetyl-alpha-D-glucosamine from N-acetyl-alpha-D-glucosamine 1-phosphate: step 1/1. It functions in the pathway bacterial outer membrane biogenesis; LPS lipid A biosynthesis. Its function is as follows. Catalyzes the last two sequential reactions in the de novo biosynthetic pathway for UDP-N-acetylglucosamine (UDP-GlcNAc). The C-terminal domain catalyzes the transfer of acetyl group from acetyl coenzyme A to glucosamine-1-phosphate (GlcN-1-P) to produce N-acetylglucosamine-1-phosphate (GlcNAc-1-P), which is converted into UDP-GlcNAc by the transfer of uridine 5-monophosphate (from uridine 5-triphosphate), a reaction catalyzed by the N-terminal domain. The chain is Bifunctional protein GlmU from Bradyrhizobium diazoefficiens (strain JCM 10833 / BCRC 13528 / IAM 13628 / NBRC 14792 / USDA 110).